A 481-amino-acid chain; its full sequence is Chromosomal replication initiator protein DnaA (481 aa).

Positions 1-74 (MSQDLWSFCL…ELGAEFHGAP (74 aa)) are domain I, interacts with DnaA modulators. The segment at 74 to 144 (PIEIELVLPA…TASDLAYEKT (71 aa)) is domain II. Residues 101 to 123 (AGPAPAPTPSQAPAATAAAPAVV) are disordered. Over residues 111 to 123 (QAPAATAAAPAVV) the composition is skewed to low complexity. A domain III, AAA+ region region spans residues 145-361 (RLNADFTFDT…GALNKVVAFA (217 aa)). Residues Gly189, Gly191, Lys192, and Thr193 each coordinate ATP. The domain IV, binds dsDNA stretch occupies residues 362–481 (RFHGRGITLE…VHVLTQVLRG (120 aa)).

Belongs to the DnaA family. In terms of assembly, oligomerizes as a right-handed, spiral filament on DNA at oriC.

Its subcellular location is the cytoplasm. Its function is as follows. Plays an essential role in the initiation and regulation of chromosomal replication. ATP-DnaA binds to the origin of replication (oriC) to initiate formation of the DNA replication initiation complex once per cell cycle. Binds the DnaA box (a 9 base pair repeat at the origin) and separates the double-stranded (ds)DNA. Forms a right-handed helical filament on oriC DNA; dsDNA binds to the exterior of the filament while single-stranded (ss)DNA is stabiized in the filament's interior. The ATP-DnaA-oriC complex binds and stabilizes one strand of the AT-rich DNA unwinding element (DUE), permitting loading of DNA polymerase. After initiation quickly degrades to an ADP-DnaA complex that is not apt for DNA replication. Binds acidic phospholipids. In Aromatoleum aromaticum (strain DSM 19018 / LMG 30748 / EbN1) (Azoarcus sp. (strain EbN1)), this protein is Chromosomal replication initiator protein DnaA.